The chain runs to 295 residues: 3-hydroxy-5-phosphonooxypentane-2,4-dione thiolase (295 aa).

Residue Lys203 is the Schiff-base intermediate with substrate of the active site.

It belongs to the DeoC/FbaB aldolase family. In terms of assembly, homodecamer.

The protein resides in the cytoplasm. It carries out the reaction dihydroxyacetone phosphate + acetyl-CoA = 3-hydroxy-2,4-dioxopentyl phosphate + CoA. In terms of biological role, involved in the degradation of phospho-AI-2, thereby terminating induction of the lsr operon and closing the AI-2 signaling cycle. Catalyzes the transfer of an acetyl moiety from 3-hydroxy-5-phosphonooxypentane-2,4-dione to CoA to form glycerone phosphate and acetyl-CoA. This Enterobacter sp. (strain 638) protein is 3-hydroxy-5-phosphonooxypentane-2,4-dione thiolase.